The sequence spans 282 residues: Malonyl-[acyl-carrier protein] O-methyltransferase 1 (282 aa).

The protein belongs to the methyltransferase superfamily.

The catalysed reaction is malonyl-[ACP] + S-adenosyl-L-methionine = malonyl-[ACP] methyl ester + S-adenosyl-L-homocysteine. The protein operates within cofactor biosynthesis; biotin biosynthesis. In terms of biological role, converts the free carboxyl group of a malonyl-thioester to its methyl ester by transfer of a methyl group from S-adenosyl-L-methionine (SAM). It allows to synthesize pimeloyl-ACP via the fatty acid synthetic pathway. The polypeptide is Malonyl-[acyl-carrier protein] O-methyltransferase 1 (Coxiella burnetii (strain RSA 493 / Nine Mile phase I)).